Consider the following 59-residue polypeptide: Large ribosomal subunit protein uL30 (59 aa).

Belongs to the universal ribosomal protein uL30 family. In terms of assembly, part of the 50S ribosomal subunit.

The polypeptide is Large ribosomal subunit protein uL30 (Alkaliphilus metalliredigens (strain QYMF)).